The sequence spans 4194 residues: Hybrid PKS-NRPS synthetase pydA (4194 aa).

Positions 14-450 constitute a Ketosynthase family 3 (KS3) domain; that stretch reads REPIAVVGSG…GTNAHAIVEN (437 aa). Active-site for beta-ketoacyl synthase activity residues include C187, H326, and H370. The Malonyl-CoA:ACP transacylase (MAT) domain maps to 565-887; that stretch reads VFTGQGAQWA…QRGKDDVQAF (323 aa). Residues 953-1088 form an N-terminal hotdog fold region; that stretch reads HPLLGTRTTD…GRVIVITGEA (136 aa). Residues 953 to 1257 enclose the PKS/mFAS DH domain; sequence HPLLGTRTTD…VVSFSEPTAE (305 aa). H985 (proton acceptor; for dehydratase activity) is an active-site residue. The interval 1103 to 1257 is C-terminal hotdog fold; that stretch reads LVDIPEDRFY…VVSFSEPTAE (155 aa). The active-site Proton donor; for dehydratase activity is D1163. The interval 1302–1596 is methyltransferase (cMeT) domain; that stretch reads YMRQLASLFP…FSGVDSTTHE (295 aa). The Ketoreductase (KR) domain occupies 2141 to 2314; the sequence is TYVFFGLTSD…AGSILHIGAV (174 aa). The Carrier 1 domain occupies 2421–2505; that stretch reads TTAEEALEIV…ELVEFAVENM (85 aa). At S2465 the chain carries O-(pantetheine 4'-phosphoryl)serine. The segment at 2512–2583 is disordered; sequence NMSDSLNAVP…ERDSSTASLE (72 aa). Residues 2526–2547 are compositionally biased toward low complexity; the sequence is APVIPASPPSGSVSSAPSSDPP. Residues 2550–2565 show a composition bias toward polar residues; that stretch reads TAETSQHLSESSSKTS. Positions 2566-2577 are enriched in basic and acidic residues; it reads QPDEKQSEERDS. Residues 2591-3023 are condensation; the sequence is EKVLPVSPGQ…QILKDVSLFT (433 aa). Residues 3056 to 3467 form an adenylation region; sequence ANPPQEIALR…RIEGDTQIKL (412 aa). One can recognise a Carrier 2 domain in the interval 3580–3660; the sequence is TQLTEAESEL…AMAAVIQDLS (81 aa). S3620 carries the post-translational modification O-(pantetheine 4'-phosphoryl)serine. The 220-residue stretch at 3701 to 3920 folds into the Thioester reductase (TE) domain; it reads ITGATGFLGK…VDLISVERAA (220 aa). Disordered regions lie at residues 4031 to 4110 and 4163 to 4194; these read RRDK…DEQI and KGEY…EPDD. The segment covering 4057-4072 has biased composition (basic and acidic residues); sequence RGRDVSPRHPALDHPD. Acidic residues predominate over residues 4174–4183; that stretch reads EEAEEAEWQC. Positions 4184–4194 are enriched in basic and acidic residues; the sequence is DEGHGDGEPDD.

In the C-terminal section; belongs to the NRP synthetase family. Pantetheine 4'-phosphate is required as a cofactor.

It participates in mycotoxin biosynthesis. In terms of biological role, hybrid PKS-NRPS synthetase; part of the gene cluster that mediates the biosynthesis of pyrrocidines, fungal natural products containing a macrocyclic para-cyclophane connected to a decahydrofluorene ring system that show potent antibiotic activities toward Gram-negative bacteria. Within the pathway, the PKS-NRPS pydA, with the help of the trans-enoyl reductase pydC, synthesize the polyketide-tyrosyl acyl thioester product which can be reductively off-loaded by the terminal reductase (R) domain in pydA. The PKS module of pydA acts in combination with the trans-acting enoyl reductase pydC to produce a methylated polyketide attached to the ACP domain. In parallel, the adenylation (A) domain of the NRPS module activated L-tyrosine, which is then transferred to the ACP domain. The condensation (C) domain subsequently link this group to the polyketide chain, forming an enzyme-bound amide. The alpha/beta hydrolase pydG is then required to catalyze the subsequent Knoevenagel condensation that affords the 3-pyrrolin-2-one ring, whereas the four proteins pydB, pydE, pydX and pydZ then function synergistically to form the cyclophane. PydB and the membrane-bound pydX and pydZ are lipid-binding proteins that can sequester and mold the pdyG product into the inverse S-shape. Binding of the medium chain reductase pydE to the complex would trigger the cascade oxidative cyclization. PydY is involved in the Diels-Alder cycloaddition that forms the decahydrofluorene core. Additional non-enzymatic hydroxylation yields pyrrocidine A2 which can be further reduced into pyrrocidine B by an endogenous reductase. In Acremonium sp, this protein is Hybrid PKS-NRPS synthetase pydA.